The primary structure comprises 87 residues: Beta-toxin Cn4 (87 aa).

Positions 1 to 19 (MNSLLMITACLALVGTVWA) are cleaved as a signal peptide. The LCN-type CS-alpha/beta domain maps to 20–85 (KEGYLVNSYT…VWPLKNKTCN (66 aa)). 4 disulfides stabilise this stretch: Cys31/Cys84, Cys35/Cys60, Cys44/Cys65, and Cys48/Cys67. The residue at position 85 (Asn85) is an Asparagine amide.

The protein belongs to the long (4 C-C) scorpion toxin superfamily. Sodium channel inhibitor family. Beta subfamily. As to expression, expressed by the venom gland.

It is found in the secreted. In terms of biological role, beta toxins bind voltage-independently at site-4 of sodium channels (Nav) and shift the voltage of activation toward more negative potentials thereby affecting sodium channel activation and promoting spontaneous and repetitive firing. This toxin affects the activation mechanism of sodium channels of squid axon. It also competes with Cn2 in rat brain synaptosomes. Is lethal to mice. In Centruroides noxius (Mexican scorpion), this protein is Beta-toxin Cn4.